The primary structure comprises 72 residues: Large ribosomal subunit protein bL31 (72 aa).

Zn(2+) contacts are provided by cysteine 16, cysteine 18, cysteine 37, and cysteine 40.

The protein belongs to the bacterial ribosomal protein bL31 family. Type A subfamily. Part of the 50S ribosomal subunit. Requires Zn(2+) as cofactor.

Its function is as follows. Binds the 23S rRNA. The chain is Large ribosomal subunit protein bL31 from Buchnera aphidicola subsp. Schizaphis graminum (strain Sg).